A 142-amino-acid chain; its full sequence is Large ribosomal subunit protein uL11 (142 aa).

It belongs to the universal ribosomal protein uL11 family. Part of the ribosomal stalk of the 50S ribosomal subunit. Interacts with L10 and the large rRNA to form the base of the stalk. L10 forms an elongated spine to which L12 dimers bind in a sequential fashion forming a multimeric L10(L12)X complex. One or more lysine residues are methylated.

Forms part of the ribosomal stalk which helps the ribosome interact with GTP-bound translation factors. The sequence is that of Large ribosomal subunit protein uL11 from Leptospira interrogans serogroup Icterohaemorrhagiae serovar copenhageni (strain Fiocruz L1-130).